A 356-amino-acid polypeptide reads, in one-letter code: Galactosylgalactosylxylosylprotein 3-beta-glucuronosyltransferase sqv-8 (356 aa).

At 1–9 (MFPSRLLEK) the chain is on the cytoplasmic side. Residues 10–30 (WWLRAFIALVIFFVWQLFYAI) traverse the membrane as a helical; Signal-anchor for type II membrane protein segment. The Lumenal portion of the chain corresponds to 31–356 (NRVQSLEEER…LEAHALGVDN (326 aa)). 2 N-linked (GlcNAc...) asparagine glycosylation sites follow: Asn93 and Asn173. Position 208 (Asp208) interacts with Mn(2+). Asn246 and Asn272 each carry an N-linked (GlcNAc...) asparagine glycan. Glu294 functions as the Proton acceptor in the catalytic mechanism.

Belongs to the glycosyltransferase 43 family.

The protein localises to the membrane. It carries out the reaction 3-O-(beta-D-galactosyl-(1-&gt;3)-beta-D-galactosyl-(1-&gt;4)-beta-D-xylosyl)-L-seryl-[protein] + UDP-alpha-D-glucuronate = 3-O-(beta-D-GlcA-(1-&gt;3)-beta-D-Gal-(1-&gt;3)-beta-D-Gal-(1-&gt;4)-beta-D-Xyl)-L-seryl-[protein] + UDP + H(+). Glycosyltransferase required for the biosynthesis of the tetrasaccharide (GlcA-Gal-Gal-Xyl-)Ser core linker of heparan sulfate and chondroitin sulfate. May be involved in the biosynthesis of the HNK-1 carbohydrate epitope on glycoproteins. Required for embryonic development. Involved in the elongation of the pharyngeal isthmus during the later stages of embryonic development. Involved in vulval epithelium invagination. This is Galactosylgalactosylxylosylprotein 3-beta-glucuronosyltransferase sqv-8 (sqv-8) from Caenorhabditis elegans.